Consider the following 56-residue polypeptide: Stable protein 1 (56 aa).

A Stress-response A/B barrel domain is found at 1-44 (GYTHAFESTFESKSGLQEYLDSAALAAFAEGFLPTLSQRSFNWG).

This chain is Stable protein 1, found in Populus euphratica (Euphrates poplar).